The following is a 239-amino-acid chain: Transcription factor MYB10 (239 aa).

2 consecutive HTH myb-type domains span residues 11 to 63 (KSQV…INYL) and 64 to 118 (RPGL…KKRL). 2 DNA-binding regions (H-T-H motif) span residues 39 to 63 (WRSL…INYL) and 91 to 114 (WSKI…NTHL).

Expressed in cauline leaves and siliques.

Its subcellular location is the nucleus. In terms of biological role, involved in metal ions homeostasis, including iron ions (Fe) acquisition, via the regulation of NAS4 and NAS2 genes expression. Necessary for plant survival in alkaline soil where iron availability is greatly restricted. Triggers tolerance to nickel (Ni) and zinc (Zn) ions. The polypeptide is Transcription factor MYB10 (Arabidopsis thaliana (Mouse-ear cress)).